A 369-amino-acid polypeptide reads, in one-letter code: Cytoplasmic tRNA 2-thiolation protein 1 (369 aa).

Belongs to the TtcA family. CTU1/NCS6/ATPBD3 subfamily.

The protein localises to the cytoplasm. Its pathway is tRNA modification; 5-methoxycarbonylmethyl-2-thiouridine-tRNA biosynthesis. Plays a central role in 2-thiolation of mcm(5)S(2)U at tRNA wobble positions of tRNA(Lys), tRNA(Glu) and tRNA(Gln). Directly binds tRNAs and probably acts by catalyzing adenylation of tRNAs, an intermediate required for 2-thiolation. It is unclear whether it acts as a sulfurtransferase that transfers sulfur from thiocarboxylated URM1 onto the uridine of tRNAs at wobble position. Prior mcm(5) tRNA modification by the elongator complex is required for 2-thiolation. May also be involved in protein urmylation. This chain is Cytoplasmic tRNA 2-thiolation protein 1, found in Meyerozyma guilliermondii (strain ATCC 6260 / CBS 566 / DSM 6381 / JCM 1539 / NBRC 10279 / NRRL Y-324) (Yeast).